A 470-amino-acid polypeptide reads, in one-letter code: Aldehyde dehydrogenase family 3 comG (470 aa).

196–201 (GSVKVG) contributes to the NAD(+) binding site. Catalysis depends on residues glutamate 218 and cysteine 252.

It belongs to the aldehyde dehydrogenase family.

The protein localises to the cytoplasm. It catalyses the reaction an aldehyde + NADP(+) + H2O = a carboxylate + NADPH + 2 H(+). It carries out the reaction an aldehyde + NAD(+) + H2O = a carboxylate + NADH + 2 H(+). The protein is Aldehyde dehydrogenase family 3 comG (comG) of Dictyostelium discoideum (Social amoeba).